A 430-amino-acid chain; its full sequence is Adenylosuccinate synthetase (430 aa).

GTP-binding positions include 13–19 and 41–43; these read GDEGKGK and GHT. The Proton acceptor role is filled by Asp14. The Mg(2+) site is built by Asp14 and Gly41. Residues 14–17, 39–42, Thr130, Arg144, Gln225, Thr240, and Arg304 contribute to the IMP site; these read DEGK and NAGH. The active-site Proton donor is His42. A substrate-binding site is contributed by 300-306; sequence ASTGRPR. GTP contacts are provided by residues Arg306, 332-334, and 414-416; these read KLD and STG.

The protein belongs to the adenylosuccinate synthetase family. In terms of assembly, homodimer. It depends on Mg(2+) as a cofactor.

The protein localises to the cytoplasm. The enzyme catalyses IMP + L-aspartate + GTP = N(6)-(1,2-dicarboxyethyl)-AMP + GDP + phosphate + 2 H(+). It participates in purine metabolism; AMP biosynthesis via de novo pathway; AMP from IMP: step 1/2. Functionally, plays an important role in the de novo pathway of purine nucleotide biosynthesis. Catalyzes the first committed step in the biosynthesis of AMP from IMP. This chain is Adenylosuccinate synthetase, found in Xanthomonas oryzae pv. oryzae (strain PXO99A).